A 62-amino-acid chain; its full sequence is MTLAFQLAVFALIATSSILLIGVPVVFASPDGWSSNKNVVFSGTSLWIGLVFLVGILNSLIS.

Transmembrane regions (helical) follow at residues 8–28 (AVFALIATSSILLIGVPVVFA) and 41–61 (FSGTSLWIGLVFLVGILNSLI).

The protein belongs to the PsbZ family. PSII is composed of 1 copy each of membrane proteins PsbA, PsbB, PsbC, PsbD, PsbE, PsbF, PsbH, PsbI, PsbJ, PsbK, PsbL, PsbM, PsbT, PsbY, PsbZ, Psb30/Ycf12, at least 3 peripheral proteins of the oxygen-evolving complex and a large number of cofactors. It forms dimeric complexes.

The protein localises to the plastid. It localises to the chloroplast thylakoid membrane. In terms of biological role, may control the interaction of photosystem II (PSII) cores with the light-harvesting antenna, regulates electron flow through the 2 photosystem reaction centers. PSII is a light-driven water plastoquinone oxidoreductase, using light energy to abstract electrons from H(2)O, generating a proton gradient subsequently used for ATP formation. The protein is Photosystem II reaction center protein Z of Panax ginseng (Korean ginseng).